The primary structure comprises 822 residues: Cadherin-3 (822 aa).

An N-terminal signal peptide occupies residues 1–25; that stretch reads MELLSGPHAFLLLLLQVCWLRSVVS. Residues 26–99 constitute a propeptide that is removed on maturation; the sequence is EPYRAGFIGE…PTRILRRRKR (74 aa). Cadherin domains lie at 100–207, 208–320, 321–432, 433–538, and 539–645; these read EWVM…KPKF, TQDT…APEF, EPQK…APVF, VPPS…DHGP, and IPEP…RPWK. At 100-647 the chain is on the extracellular side; it reads EWVMPPIFVP…NDCPRPWKGG (548 aa). N192 carries N-linked (GlcNAc...) asparagine glycosylation. The N-linked (GlcNAc...) asparagine glycan is linked to N558. A helical membrane pass occupies residues 648-670; sequence FILPILGAVLALLTLLLALLLLV. The Cytoplasmic portion of the chain corresponds to 671-822; sequence RKKRKVKEPL…ADMYGGGEDD (152 aa).

In terms of assembly, interacts with CDCP1 and CTNNB1.

It localises to the cell membrane. In terms of biological role, cadherins are calcium-dependent cell adhesion proteins. They preferentially interact with themselves in a homophilic manner in connecting cells; cadherins may thus contribute to the sorting of heterogeneous cell types. This Mus musculus (Mouse) protein is Cadherin-3 (Cdh3).